The primary structure comprises 2094 residues: MANVFQIAVFGDLSVPYHSELRRLFSEKRDYVLATLFTKSYYAVKSEISRLPPSQRAQFPFSSNIEELLNADKESTTSNYALDSFFFCLCQISSFVSHLNRSGTSYPRASSSCLASRCIGLLAAVAISCSENVYDLVSIAPEVVALAFRVGLLVQGKTKSVTLSSGNGASCSTVIAGLDEPAASQLLNAYFDNKGAPALSRVYVSAVGSGTITLSGPPAQLKEFLSHHSDLKAGKIQVGGLFHSPSLYTDADVSGLVASATAHLRGRVARIPVILNGHEKQQELVGGETCQHLLEVVVSDILRHQMRWDLAAERVIRAIRRSGCSAVELLPFVAGSVEGLSSVLRATMGIDRVDVPNTAGVDSSSRGSGHADAEKQPARSKIAIIGFSGRYPEADDNEEFWELLAAGLDVHREIPKERFDPYLYFDPTCKKKNTSGVTKGCFVRNPDLFDSRFFSMSPREADQADPAQRFALMTAYEAMEMAGFVPDSTPSSQRSRVGVFYGTASDDYREINAAQNVDTYFVPGGSRAFLPARINYHFRFSGPSFDVDTACSSGLAAVHIACNSLWAEDCDVAIAGGTNILTNPDNWAGLDRAHFLSRTGNCNTFDDAADGYCRSDTVATVILKRLEDALLDGDPVFGTILGAYTNHSAEAVSMTRPHSGAQRAICTRILRSSNVDCSEVSYVEMHGTGTQHGDATEMDSVLSVFAPDTTSRKSPLFIGSVKANVGHAESAAGISSLVKVLLMMQKNAIPRHVGIKTKLNRNFPKDLVQRNVHISLENRSWPRPDPRVVPHGRRVFINNFGAAGGNSSVLVEDAPVRPAPERDDASWPVHAVAVSAKTQNSFKENIRALIAYLETRPDVSLGSLSYTTTARRIHYSYRTAVVGSSVDEIRNALHDVAAREKHLSTAGGGPPIGFSFTGQGSQYLGMGKKLLSLPQFESLLAGLDGIVRLQGFPSILDVVSGKAETPIEDMSPVKVQLAIACLEMALGKFWIALGVVPQIVVGHSLGEYAALNIAGVLSDADTIHLVGTRARLLEKACSMGSHSMLAVKASAAEASSLRSSSHPDLDIACINGPEDTVVAGSNSQIEAFKDLLNGRSVKSTQVKVQFAFHSAQVEPMLEAFRQACGAVVVNEPSIPVISPLLGRVMKSASDIGPVGDYLARHCRETVNFCEGVLSARNSGLIPDKMMWVEVGPHPICSNMLRSTLGSSTQTIPSLRRGEDDCKIFTPALAKLYDSGLAINWGEYHAGAQQTKQVLLLPSYRWELKSHWIPYTNDWCLTKGDAPAPQLLALPEAAAAAAAAERRLFTTSVQYITAESYGAQEASMTARTDVQHPDFREVLLAHQVNGRPVCSSAVYADMAYTMFSRMLEKSSVPFDKSDLGIEVADMAADKSLILNDDPSPQMLELKASVNWSTRQGSFSMSSISSADGKPTAKHAKCSGFFTDKSRWKSEWKRRDFLVKSRIQELRSSVHDDSGSVHMIKTGMFYKLFTALVDYRDSFKGCRELVMRSADLESTAKVRFNTPAGTADKWKLPPHWLDSLGQITGFTMNGNDEVDSKNQVYINHGWDNMKICGVLSDQTTYNTYLKMQPKDKGSYCGDVYIFNQDMDEVVAVYEGVTFAAVQRKVLDLVLPKPKAAAQSGAAAAAAAAAPSQRQQQQQQQQQQQPAQPVAASQESGMDDMPPTLVPSEKKDVPSEKLKVIIAEEVGASISDVQDDAELAPLGVDSLLALTISDRMLEELGLRVDSSAFISCITVAELVRHILGSSTPSSDSGPATPSITPLQEPDFGTSALSERIESAFASVQVESDRCSDTTQYGDEKADAVTKFEIPPATSVLLQGNPRTCTRKVWLFPDGSGSAASYMPLPDVDPAKVAIYGLSSPFIKHTATAKPCQFGEMTAAYVAEMRRRQPSGPYSVGGWSAGGLCAYDAAQRLVADGETVDALILIDSPNPIGLKELPPRLYNELSRLNVFGAEPGAKVPEWLVPHFKLFADILVTCKLRPWQAAKPLPAWALWARNGVDENQTIERWPSDPENMTWLLNRRTQAILGCNGWDELLGKKNITVGVVEGAHHFSMLKQPAVPQVSDFLRTIMESTGAGI.

An N-terminal acylcarrier protein transacylase (SAT) domain region spans residues 9 to 243; sequence VFGDLSVPYH…GKIQVGGLFH (235 aa). A disordered region spans residues 357–377; the sequence is NTAGVDSSSRGSGHADAEKQP. One can recognise a Ketosynthase family 3 (KS3) domain in the interval 379 to 813; it reads RSKIAIIGFS…GGNSSVLVED (435 aa). Active-site for beta-ketoacyl synthase activity residues include cysteine 551, histidine 686, and histidine 727. The interval 914 to 1227 is malonyl-CoA:ACP transacylase (MAT) domain; sequence FSFTGQGSQY…EDDCKIFTPA (314 aa). Serine 1004 (for acyl/malonyl transferase activity) is an active-site residue. The interval 1305-1629 is product template (PT) domain; the sequence is TTSVQYITAE…QRKVLDLVLP (325 aa). Positions 1308–1445 are N-terminal hotdog fold; the sequence is VQYITAESYG…CSGFFTDKSR (138 aa). Residues 1308–1625 enclose the PKS/mFAS DH domain; it reads VQYITAESYG…FAAVQRKVLD (318 aa). Histidine 1341 serves as the catalytic Proton acceptor; for dehydratase activity. The segment at 1473–1625 is C-terminal hotdog fold; the sequence is GSVHMIKTGM…FAAVQRKVLD (153 aa). The active-site Proton donor; for dehydratase activity is the aspartate 1536. Low complexity predominate over residues 1644-1671; it reads AAAAPSQRQQQQQQQQQQQPAQPVAASQ. The segment at 1644–1689 is disordered; sequence AAAAPSQRQQQQQQQQQQQPAQPVAASQESGMDDMPPTLVPSEKKD. The Carrier domain occupies 1689–1763; that stretch reads DVPSEKLKVI…ELVRHILGSS (75 aa). The residue at position 1723 (serine 1723) is an O-(pantetheine 4'-phosphoryl)serine. Over residues 1762 to 1778 the composition is skewed to polar residues; that stretch reads SSTPSSDSGPATPSITP. Residues 1762 to 1782 are disordered; sequence SSTPSSDSGPATPSITPLQEP. The tract at residues 1844–2069 is claisen cyclase domain; that stretch reads KVWLFPDGSG…GVVEGAHHFS (226 aa). The active-site For Claisen cyclase activity is the serine 1916.

The catalysed reaction is 6 malonyl-CoA + acetyl-CoA + 6 H(+) = naphtopyrone YWA1 + 6 CO2 + 7 CoA + H2O. It participates in secondary metabolite biosynthesis. Non-reducing polyketide synthase; part of the gene cluster that mediates the biosynthesis of ustilaginoidins, dimeric gamma-naphthopyrones isolated from different fungal species. The first step in the biosynthesis of ustilaginoidins is the production of gamma-naphthopyrone precursor YWA1 by the non-reducing polyketide synthase ustP, via condensation of one acetyl-CoA starter unit with 6 malonyl-CoA units. YWA1 is then probably substrate of the ustZ to yield norrubrofusarin via a dehydration reaction. A key enzyme in the biosynthetic pathway is the laccase ustL, which catalyzes the oxidative dimerization of norrubrofusarin to ustilaginoidin A. It can produce the M- and P-atropisomers in varying amounts, depending on the reaction conditions. For the biosynthesis of 3-methylustilaginoid in derivatives such as chaetochromin A, a methylated derivative of YWA1 is required. The C-methylation is considered to be catalyzed by ustM, the phosphopantetheine attachment site of which indicates that it acts on the growing polyketide chain before release of the product. For the biosynthesis of chaetochromin A, it is assumed that saturation of the D2 double bond takes place before dimerization, and is probably catalyzed by an external reductase because no candidate gene was identified within the cluster. The polypeptide is Non-reducing polyketide synthase ustP (Ustilaginoidea virens (Rice false smut fungus)).